The chain runs to 431 residues: Serine hydroxymethyltransferase (431 aa).

122–124 (GHI) lines the (6S)-5,6,7,8-tetrahydrofolate pocket. Residue lysine 228 is modified to N6-(pyridoxal phosphate)lysine. Glutamate 245 contributes to the (6S)-5,6,7,8-tetrahydrofolate binding site.

The protein belongs to the SHMT family. As to quaternary structure, homodimer. Requires pyridoxal 5'-phosphate as cofactor.

It localises to the cytoplasm. It functions in the pathway amino-acid biosynthesis; glycine biosynthesis; glycine from L-serine: step 1/1. Its function is as follows. Catalyzes the reversible interconversion of serine and glycine with a modified folate serving as the one-carbon carrier. Also exhibits a pteridine-independent aldolase activity toward beta-hydroxyamino acids, producing glycine and aldehydes, via a retro-aldol mechanism. This is Serine hydroxymethyltransferase from Thermococcus kodakarensis (strain ATCC BAA-918 / JCM 12380 / KOD1) (Pyrococcus kodakaraensis (strain KOD1)).